The sequence spans 187 residues: Protein GrpE (187 aa).

The disordered stretch occupies residues 1-38 (MSEEKQTVEQNETEEQEIIEEQAAADEQQEETNESELL). Over residues 11 to 34 (NETEEQEIIEEQAAADEQQEETNE) the composition is skewed to acidic residues.

Belongs to the GrpE family. In terms of assembly, homodimer.

The protein localises to the cytoplasm. Participates actively in the response to hyperosmotic and heat shock by preventing the aggregation of stress-denatured proteins, in association with DnaK and GrpE. It is the nucleotide exchange factor for DnaK and may function as a thermosensor. Unfolded proteins bind initially to DnaJ; upon interaction with the DnaJ-bound protein, DnaK hydrolyzes its bound ATP, resulting in the formation of a stable complex. GrpE releases ADP from DnaK; ATP binding to DnaK triggers the release of the substrate protein, thus completing the reaction cycle. Several rounds of ATP-dependent interactions between DnaJ, DnaK and GrpE are required for fully efficient folding. The protein is Protein GrpE of Bacillus subtilis (strain 168).